The chain runs to 503 residues: Ribose import ATP-binding protein RbsA 1 (503 aa).

ABC transporter domains lie at 5 to 241 (IALE…VGRA) and 253 to 495 (IGQP…AGIE). 37 to 44 (GENGAGKS) provides a ligand contact to ATP.

It belongs to the ABC transporter superfamily. Ribose importer (TC 3.A.1.2.1) family. The complex is composed of an ATP-binding protein (RbsA), two transmembrane proteins (RbsC) and a solute-binding protein (RbsB).

It is found in the cell inner membrane. The enzyme catalyses D-ribose(out) + ATP + H2O = D-ribose(in) + ADP + phosphate + H(+). Part of the ABC transporter complex RbsABC involved in ribose import. Responsible for energy coupling to the transport system. The chain is Ribose import ATP-binding protein RbsA 1 from Rhizobium meliloti (strain 1021) (Ensifer meliloti).